Here is a 661-residue protein sequence, read N- to C-terminus: UvrABC system protein B (661 aa).

In terms of domain architecture, Helicase ATP-binding spans 28 to 414 (DGVNERKRHQ…HTDEMVEQII (387 aa)). Residue 41–48 (GATGTGKT) coordinates ATP. Residues 94 to 117 (YYDYYQPEAYVPSTDTFIEKDASI) carry the Beta-hairpin motif. In terms of domain architecture, Helicase C-terminal spans 432–598 (QIDDLLSEIQ…TINKKIHDVI (167 aa)). The interval 603–624 (ESDETNQQQQTELPKKMTKKER) is disordered. The 36-residue stretch at 625 to 660 (QKTIENIEKEMKKAAKDLDFEKATELRDMLFELKAE) folds into the UVR domain.

This sequence belongs to the UvrB family. Forms a heterotetramer with UvrA during the search for lesions. Interacts with UvrC in an incision complex.

It localises to the cytoplasm. In terms of biological role, the UvrABC repair system catalyzes the recognition and processing of DNA lesions. A damage recognition complex composed of 2 UvrA and 2 UvrB subunits scans DNA for abnormalities. Upon binding of the UvrA(2)B(2) complex to a putative damaged site, the DNA wraps around one UvrB monomer. DNA wrap is dependent on ATP binding by UvrB and probably causes local melting of the DNA helix, facilitating insertion of UvrB beta-hairpin between the DNA strands. Then UvrB probes one DNA strand for the presence of a lesion. If a lesion is found the UvrA subunits dissociate and the UvrB-DNA preincision complex is formed. This complex is subsequently bound by UvrC and the second UvrB is released. If no lesion is found, the DNA wraps around the other UvrB subunit that will check the other stand for damage. The protein is UvrABC system protein B of Staphylococcus epidermidis (strain ATCC 12228 / FDA PCI 1200).